Here is a 705-residue protein sequence, read N- to C-terminus: Kinesin-like protein KIF2A (705 aa).

The globular stretch occupies residues 1-216; the sequence is MATANFGKIQ…LDYRPLTTAD (216 aa). The interval 65 to 186 is disordered; that stretch reads DLVPDEDIEP…QELREKRAQD (122 aa). A Phosphoserine modification is found at Ser-75. Thr-96 is subject to Phosphothreonine. Lys-101 is subject to N6-acetyllysine. Polar residues predominate over residues 122–139; that stretch reads LPEQSSSAQQNGSVSDIS. Ser-134 and Ser-139 each carry phosphoserine. A compositionally biased stretch (basic and acidic residues) spans 158–186; it reads CVKEVEKLQEKREKRRLQQQELREKRAQD. In terms of domain architecture, Kinesin motor spans 222–552; it reads RICVCVRKRP…LRYANRVKEL (331 aa). 312 to 319 serves as a coordination point for ATP; it reads GQTGSGKT. Residues Thr-528 and Tyr-545 each carry the phosphoserine modification. Residues 659 to 698 are a coiled coil; sequence ATQLEAILEQKIDILTELRDKVKSFRAALQEEEQASKQIN.

The protein belongs to the TRAFAC class myosin-kinesin ATPase superfamily. Kinesin family. MCAK/KIF2 subfamily. In terms of assembly, interacts with AURKA and PLK1. Interacts with PSRC1. Interacts with MCRS1; the interaction enhances recruitment of KIF2A to the minus ends of spindle microtubules which promotes chromosome alignment. Highest level in lung. High level in ovary, moderate levels in heart, kidney, placenta, skeletal muscle and spleen (at protein level). Pancreas and spleen express a shorter isoform (at protein level). Expressed in the flagellum of elongated spermatids and sperm in the testis lumen (at protein level). Isoform 1 expressed in neuronal cells. Isoform 2 expressed in astrocytes and fibroblasts.

The protein resides in the cytoplasm. It is found in the cytoskeleton. Its subcellular location is the microtubule organizing center. The protein localises to the centrosome. It localises to the spindle pole. The protein resides in the spindle. It is found in the lysosome. Plus end-directed microtubule-dependent motor required for normal brain development. May regulate microtubule dynamics during axonal growth. Required for normal progression through mitosis. Required for normal congress of chromosomes at the metaphase plate. Required for normal spindle dynamics during mitosis. Promotes spindle turnover. Implicated in formation of bipolar mitotic spindles. Has microtubule depolymerization activity. The protein is Kinesin-like protein KIF2A (Kif2a) of Mus musculus (Mouse).